Here is a 456-residue protein sequence, read N- to C-terminus: 3-isopropylmalate dehydratase large subunit (456 aa).

Positions 336, 396, and 399 each coordinate [4Fe-4S] cluster.

It belongs to the aconitase/IPM isomerase family. LeuC type 1 subfamily. Heterodimer of LeuC and LeuD. Requires [4Fe-4S] cluster as cofactor.

It catalyses the reaction (2R,3S)-3-isopropylmalate = (2S)-2-isopropylmalate. Its pathway is amino-acid biosynthesis; L-leucine biosynthesis; L-leucine from 3-methyl-2-oxobutanoate: step 2/4. Catalyzes the isomerization between 2-isopropylmalate and 3-isopropylmalate, via the formation of 2-isopropylmaleate. This chain is 3-isopropylmalate dehydratase large subunit, found in Staphylococcus epidermidis (strain ATCC 35984 / DSM 28319 / BCRC 17069 / CCUG 31568 / BM 3577 / RP62A).